We begin with the raw amino-acid sequence, 93 residues long: uncharacterized protein (93 aa).

Residues serine 36–aspartate 69 are a coiled coil.

This is an uncharacterized protein from Archaeoglobus fulgidus (strain ATCC 49558 / DSM 4304 / JCM 9628 / NBRC 100126 / VC-16).